The chain runs to 365 residues: MQKPTRPQPKAGVLDIAAYVPGKEHVEGVAKVYKLSSNETPLGPSPHAREAYRHAGEKLELYPDGQALALRQAIAETQGLNISNILCGNGSDELLGLLCQTYLAPGDETIITEHGFAVYKIQTLAAGATPVTVKEKNERIDVDAILAGVTARTKIVFIANPANPTGTYLPFEEVRRLHAGLPQHVLLVLDAAYAEYVRRNDYEAGLELVSSNENVVMMRTFSKIHGLPGLRIGWIYAPLHIIDAMNRIRGPFNMNSAAIAAGAAAIRDRAHVEKSVAYNEKWLAWLTEEFTRLGLRVTPSVTNFLLIHFPDDAAHSADKADEWLSRRGYILRRVGGYGFPNALRMTVGPEEANRGVVAALTEFLK.

Residue Lys-223 is modified to N6-(pyridoxal phosphate)lysine.

It belongs to the class-II pyridoxal-phosphate-dependent aminotransferase family. Histidinol-phosphate aminotransferase subfamily. Homodimer. Pyridoxal 5'-phosphate serves as cofactor.

It carries out the reaction L-histidinol phosphate + 2-oxoglutarate = 3-(imidazol-4-yl)-2-oxopropyl phosphate + L-glutamate. It functions in the pathway amino-acid biosynthesis; L-histidine biosynthesis; L-histidine from 5-phospho-alpha-D-ribose 1-diphosphate: step 7/9. The protein is Histidinol-phosphate aminotransferase of Brucella melitensis biotype 1 (strain ATCC 23456 / CCUG 17765 / NCTC 10094 / 16M).